The following is a 766-amino-acid chain: Dipeptidyl peptidase 4 (766 aa).

Topologically, residues 1–6 (MKTPWK) are cytoplasmic. Residues 7–28 (VLLGLLGAAALVTIITVPVVLL) traverse the membrane as a helical; Signal-anchor for type II membrane protein segment. The Extracellular portion of the chain corresponds to 29-766 (NKGTDDATAD…HFIKQCFSLP (738 aa)). N85, N92, N150, N219, N229, N281, and N321 each carry an N-linked (GlcNAc...) asparagine glycan. Cystine bridges form between C328–C339, C385–C394, C444–C447, and C454–C472. N520 carries an N-linked (GlcNAc...) asparagine glycan. The active-site Charge relay system is the S630. C649 and C762 are oxidised to a cystine. Residue N685 is glycosylated (N-linked (GlcNAc...) asparagine). Active-site charge relay system residues include D708 and H740.

The protein belongs to the peptidase S9B family. DPPIV subfamily. Monomer. Homodimer. Heterodimer with Seprase (FAP). Requires homodimerization for optimal dipeptidyl peptidase activity and T-cell costimulation. Found in a membrane raft complex, at least composed of BCL10, CARD11, DPP4 and IKBKB. Associates with collagen. Interacts with PTPRC; the interaction is enhanced in an interleukin-12-dependent manner in activated lymphocytes. Interacts (via extracellular domain) with ADA; does not inhibit its dipeptidyl peptidase activity. Interacts with CAV1 (via the N-terminus); the interaction is direct. Interacts (via cytoplasmic tail) with CARD11 (via PDZ domain); its homodimerization is necessary for interaction with CARD11. Interacts with IGF2R; the interaction is direct. Interacts with GPC3. Interacts with human coronavirus-EMC spike protein and acts as a receptor for this virus. In terms of assembly, (Microbial infection) Interacts with MERS coronavirus/MERS-CoV spike protein. Post-translationally, the soluble form (Dipeptidyl peptidase 4 soluble form also named SDPP) derives from the membrane form (Dipeptidyl peptidase 4 membrane form also named MDPP) by proteolytic processing. In terms of processing, N- and O-Glycosylated. Phosphorylated. Mannose 6-phosphate residues in the carbohydrate moiety are necessary for interaction with IGF2R in activated T-cells. Mannose 6-phosphorylation is induced during T-cell activation. In terms of tissue distribution, expressed specifically in lymphatic vessels but not in blood vessels in the skin, small intestine, esophagus, ovary, breast and prostate glands. Not detected in lymphatic vessels in the lung, kidney, uterus, liver and stomach (at protein level). Expressed in the poorly differentiated crypt cells of the small intestine as well as in the mature villous cells. Expressed at very low levels in the colon.

Its subcellular location is the secreted. The protein resides in the cell membrane. It localises to the apical cell membrane. The protein localises to the cell projection. It is found in the invadopodium membrane. Its subcellular location is the lamellipodium membrane. The protein resides in the cell junction. It localises to the membrane raft. It catalyses the reaction Release of an N-terminal dipeptide, Xaa-Yaa-|-Zaa-, from a polypeptide, preferentially when Yaa is Pro, provided Zaa is neither Pro nor hydroxyproline.. With respect to regulation, inhibited by GPC3 and diprotin A. Functionally, cell surface glycoprotein receptor involved in the costimulatory signal essential for T-cell receptor (TCR)-mediated T-cell activation. Acts as a positive regulator of T-cell coactivation, by binding at least ADA, CAV1, IGF2R, and PTPRC. Its binding to CAV1 and CARD11 induces T-cell proliferation and NF-kappa-B activation in a T-cell receptor/CD3-dependent manner. Its interaction with ADA also regulates lymphocyte-epithelial cell adhesion. In association with FAP is involved in the pericellular proteolysis of the extracellular matrix (ECM), the migration and invasion of endothelial cells into the ECM. May be involved in the promotion of lymphatic endothelial cells adhesion, migration and tube formation. When overexpressed, enhanced cell proliferation, a process inhibited by GPC3. Also acts as a serine exopeptidase with a dipeptidyl peptidase activity that regulates various physiological processes by cleaving peptides in the circulation, including many chemokines, mitogenic growth factors, neuropeptides and peptide hormones such as brain natriuretic peptide 32. Removes N-terminal dipeptides sequentially from polypeptides having unsubstituted N-termini provided that the penultimate residue is proline. In terms of biological role, (Microbial infection) Acts as a receptor for human coronavirus MERS-CoV-2. This chain is Dipeptidyl peptidase 4, found in Homo sapiens (Human).